Reading from the N-terminus, the 425-residue chain is 5-hydroxytryptamine receptor 7 (425 aa).

Residues 1–72 (MLIQVQPSHL…LLYGDTEKIV (72 aa)) are Extracellular-facing. Asn-14, Asn-41, and Asn-51 each carry an N-linked (GlcNAc...) asparagine glycan. A helical transmembrane segment spans residues 73–97 (IGVVLSIITLFTIAGNALVIISVCI). The Cytoplasmic portion of the chain corresponds to 98–107 (VKKLRQPSNY). Residues 108-129 (LVVSLAAADLSVAVAVMPFVII) form a helical membrane-spanning segment. The Extracellular segment spans residues 130–141 (TDLVGGEWLFGK). The chain crosses the membrane as a helical span at residues 142-167 (VFCNVFIAMDVMCCTASIMTLCVISV). A disulfide bridge connects residues Cys-144 and Cys-220. Residue Asp-151 coordinates serotonin. Residues 168–187 (DRYLGITRPLTYPARQNGKL) are Cytoplasmic-facing. A helical membrane pass occupies residues 188–208 (MAKMVFIVWLLSASITLPPLF). The Extracellular segment spans residues 209-226 (GWAKNVNVERVCLISQDF). Residues 227 to 249 (GYTVYSTAVAFYIPMTVMLVMYQ) form a helical membrane-spanning segment. At 250-322 (RIFVAAKISA…SIFKREQKAA (73 aa)) the chain is on the cytoplasmic side. The helical transmembrane segment at 323–348 (RTLGIIVGAFTFCWLPFFLLSTARPF) threads the bilayer. The Extracellular segment spans residues 349–359 (ICGIMCSCMPL). The helical transmembrane segment at 360–383 (RLERTLLWLGYTNSLINPLIYAFF) threads the bilayer. The Cytoplasmic portion of the chain corresponds to 384 to 425 (NRDLRTTFWNLLRCKYTNINRRLSAASMHEALKVTERHEGIL). A lipid anchor (S-palmitoyl cysteine) is attached at Cys-397.

The protein belongs to the G-protein coupled receptor 1 family.

The protein localises to the cell membrane. In terms of biological role, G-protein coupled receptor for 5-hydroxytryptamine (serotonin), a biogenic hormone that functions as a neurotransmitter, a hormone and a mitogen. Ligand binding causes a conformation change that triggers signaling via guanine nucleotide-binding proteins (G proteins) and modulates the activity of downstream effectors. HTR7 is coupled to G(s) G alpha proteins and mediates activation of adenylate cyclase activity. The chain is 5-hydroxytryptamine receptor 7 (htr7) from Xenopus laevis (African clawed frog).